A 150-amino-acid chain; its full sequence is Small ribosomal subunit protein uS11z (150 aa).

Ser-19 carries the post-translational modification Phosphoserine.

The protein belongs to the universal ribosomal protein uS11 family. As to quaternary structure, interacts with AAK6.

The protein resides in the cytoplasm. This is Small ribosomal subunit protein uS11z (RPS14A) from Arabidopsis thaliana (Mouse-ear cress).